The chain runs to 330 residues: Diacylglycerol acyltransferase/mycolyltransferase Ag85B (330 aa).

Positions 1–40 (MTDLSEKVRAWGRRLLVGAAAAVTLPGLIGLAGGAATANA) are cleaved as a signal peptide. A substrate-binding site is contributed by 82 to 83 (LR). The fibronectin-binding stretch occupies residues 98–108 (FEWYYQSGLSV). Cysteine 127 and cysteine 132 are oxidised to a cystine. 2 residues coordinate substrate: serine 166 and aspartate 194. Catalysis depends on serine 166, which acts as the Nucleophile. Glutamate 270 is a catalytic residue. Residues 272–275 (FVRS), lysine 279, and 302–304 (HSW) contribute to the substrate site. The active site involves histidine 302.

It belongs to the mycobacterial A85 antigen family.

It localises to the secreted. The catalysed reaction is 2 alpha,alpha'-trehalose 6-mycolate = alpha,alpha'-trehalose 6,6'-bismycolate + alpha,alpha-trehalose. The enzyme catalyses an acyl-CoA + a 1,2-diacyl-sn-glycerol = a triacyl-sn-glycerol + CoA. The antigen 85 proteins (FbpA, FbpB, FbpC) are responsible for the high affinity of mycobacteria for fibronectin, a large adhesive glycoprotein, which facilitates the attachment of M.tuberculosis to murine alveolar macrophages (AMs). They also help to maintain the integrity of the cell wall by catalyzing the transfer of mycolic acids to cell wall arabinogalactan and through the synthesis of alpha,alpha-trehalose dimycolate (TDM, cord factor). They catalyze the transfer of a mycoloyl residue from one molecule of alpha,alpha-trehalose monomycolate (TMM) to another TMM, leading to the formation of TDM. This is Diacylglycerol acyltransferase/mycolyltransferase Ag85B (fbpB) from Mycobacterium avium.